Here is a 450-residue protein sequence, read N- to C-terminus: UDP-N-acetylmuramoylalanine--D-glutamate ligase (450 aa).

119–125 (GSNGKTT) provides a ligand contact to ATP.

This sequence belongs to the MurCDEF family.

Its subcellular location is the cytoplasm. It carries out the reaction UDP-N-acetyl-alpha-D-muramoyl-L-alanine + D-glutamate + ATP = UDP-N-acetyl-alpha-D-muramoyl-L-alanyl-D-glutamate + ADP + phosphate + H(+). The protein operates within cell wall biogenesis; peptidoglycan biosynthesis. In terms of biological role, cell wall formation. Catalyzes the addition of glutamate to the nucleotide precursor UDP-N-acetylmuramoyl-L-alanine (UMA). This Streptococcus pneumoniae (strain Hungary19A-6) protein is UDP-N-acetylmuramoylalanine--D-glutamate ligase.